Here is a 1407-residue protein sequence, read N- to C-terminus: DNA-directed RNA polymerase subunit beta' (1407 aa).

Positions 70, 72, 85, and 88 each coordinate Zn(2+). Mg(2+)-binding residues include Asp-460, Asp-462, and Asp-464. Positions 814, 888, 895, and 898 each coordinate Zn(2+).

This sequence belongs to the RNA polymerase beta' chain family. As to quaternary structure, the RNAP catalytic core consists of 2 alpha, 1 beta, 1 beta' and 1 omega subunit. When a sigma factor is associated with the core the holoenzyme is formed, which can initiate transcription. Requires Mg(2+) as cofactor. It depends on Zn(2+) as a cofactor.

The catalysed reaction is RNA(n) + a ribonucleoside 5'-triphosphate = RNA(n+1) + diphosphate. In terms of biological role, DNA-dependent RNA polymerase catalyzes the transcription of DNA into RNA using the four ribonucleoside triphosphates as substrates. This Erwinia tasmaniensis (strain DSM 17950 / CFBP 7177 / CIP 109463 / NCPPB 4357 / Et1/99) protein is DNA-directed RNA polymerase subunit beta'.